Here is a 249-residue protein sequence, read N- to C-terminus: DNA polymerase sliding clamp (249 aa).

It belongs to the PCNA family. Homotrimer. The subunits circularize to form a toroid; DNA passes through its center. Replication factor C (RFC) is required to load the toroid on the DNA.

In terms of biological role, sliding clamp subunit that acts as a moving platform for DNA processing. Responsible for tethering the catalytic subunit of DNA polymerase and other proteins to DNA during high-speed replication. This Thermococcus onnurineus (strain NA1) protein is DNA polymerase sliding clamp.